The following is a 673-amino-acid chain: Methionine--tRNA ligase (673 aa).

Positions 13–23 match the 'HIGH' region motif; it reads PYTNGFCHLGH. Residues Cys-144, Cys-147, Cys-156, and Cys-160 each coordinate Zn(2+). A 'KMSKS' region motif is present at residues 325–329; sequence KFSKS. Lys-328 is a binding site for ATP. The tRNA-binding domain maps to 575–673; it reads DVAKLDLRVG…KDVPEGTKVH (99 aa).

The protein belongs to the class-I aminoacyl-tRNA synthetase family. MetG type 1 subfamily. Homodimer. The cofactor is Zn(2+).

The protein resides in the cytoplasm. It catalyses the reaction tRNA(Met) + L-methionine + ATP = L-methionyl-tRNA(Met) + AMP + diphosphate. Is required not only for elongation of protein synthesis but also for the initiation of all mRNA translation through initiator tRNA(fMet) aminoacylation. This Methanocorpusculum labreanum (strain ATCC 43576 / DSM 4855 / Z) protein is Methionine--tRNA ligase.